The sequence spans 311 residues: Coproporphyrin III ferrochelatase 1 (311 aa).

Fe-coproporphyrin III contacts are provided by residues tyrosine 12, arginine 29, 45 to 46, serine 53, and tyrosine 124; that span reads RY. Residues histidine 182 and glutamate 263 each coordinate Fe(2+).

Belongs to the ferrochelatase family.

It is found in the cytoplasm. It catalyses the reaction Fe-coproporphyrin III + 2 H(+) = coproporphyrin III + Fe(2+). Its pathway is porphyrin-containing compound metabolism; protoheme biosynthesis. Functionally, involved in coproporphyrin-dependent heme b biosynthesis. Catalyzes the insertion of ferrous iron into coproporphyrin III to form Fe-coproporphyrin III. The sequence is that of Coproporphyrin III ferrochelatase 1 from Bacillus cereus (strain ZK / E33L).